Reading from the N-terminus, the 222-residue chain is Methylthioribulose-1-phosphate dehydratase (222 aa).

H94 and H96 together coordinate Zn(2+).

Belongs to the aldolase class II family. MtnB subfamily. Zn(2+) is required as a cofactor.

It carries out the reaction 5-(methylsulfanyl)-D-ribulose 1-phosphate = 5-methylsulfanyl-2,3-dioxopentyl phosphate + H2O. It functions in the pathway amino-acid biosynthesis; L-methionine biosynthesis via salvage pathway; L-methionine from S-methyl-5-thio-alpha-D-ribose 1-phosphate: step 2/6. Catalyzes the dehydration of methylthioribulose-1-phosphate (MTRu-1-P) into 2,3-diketo-5-methylthiopentyl-1-phosphate (DK-MTP-1-P). This chain is Methylthioribulose-1-phosphate dehydratase, found in Yersinia pseudotuberculosis serotype IB (strain PB1/+).